The following is a 775-amino-acid chain: Probable ubiquitin carboxyl-terminal hydrolase creB (775 aa).

Residues M1–P45 are disordered. Positions L36–P45 are enriched in basic and acidic residues. The USP domain occupies Y55–T468. Residue C64 is the Nucleophile of the active site. 2 disordered regions span residues E113–E146 and A238–N269. A compositionally biased stretch (polar residues) spans S256–N269. The Proton acceptor role is filled by H419. Residues L496 to S775 are disordered. Low complexity-rich tracts occupy residues E546–S566 and E576–P585. Residues K586–L653 adopt a coiled-coil conformation. Positions A589–Q662 are enriched in basic and acidic residues. Over residues R668 to R679 the composition is skewed to basic residues. A compositionally biased stretch (low complexity) spans S705–N725. Residues T739–G757 are compositionally biased toward basic and acidic residues. A compositionally biased stretch (basic residues) spans H758–S775.

The protein belongs to the peptidase C19 family. As to quaternary structure, interacts with creA, creC and qutD.

It carries out the reaction Thiol-dependent hydrolysis of ester, thioester, amide, peptide and isopeptide bonds formed by the C-terminal Gly of ubiquitin (a 76-residue protein attached to proteins as an intracellular targeting signal).. Ubiquitin thioesterase component of the regulatory network controlling carbon source utilization through ubiquitination and deubiquitination involving creA, creB, creC, creD and acrB. Deubiquitinates the creA catabolic repressor and the quinate permease qutD. Also plays a role in response to carbon starvation and the control of extracellular proteases activity. The polypeptide is Probable ubiquitin carboxyl-terminal hydrolase creB (creB) (Aspergillus fumigatus (strain ATCC MYA-4609 / CBS 101355 / FGSC A1100 / Af293) (Neosartorya fumigata)).